A 268-amino-acid chain; its full sequence is Aliphatic sulfonates import ATP-binding protein SsuB 2 (268 aa).

Residues Val-16 to Ile-230 form the ABC transporter domain. Position 48–55 (Gly-48–Thr-55) interacts with ATP.

This sequence belongs to the ABC transporter superfamily. Aliphatic sulfonates importer (TC 3.A.1.17.2) family. The complex is composed of two ATP-binding proteins (SsuB), two transmembrane proteins (SsuC) and a solute-binding protein (SsuA).

It is found in the cell inner membrane. The catalysed reaction is ATP + H2O + aliphatic sulfonate-[sulfonate-binding protein]Side 1 = ADP + phosphate + aliphatic sulfonateSide 2 + [sulfonate-binding protein]Side 1.. Part of the ABC transporter complex SsuABC involved in aliphatic sulfonates import. Responsible for energy coupling to the transport system. The chain is Aliphatic sulfonates import ATP-binding protein SsuB 2 from Pseudomonas savastanoi pv. phaseolicola (strain 1448A / Race 6) (Pseudomonas syringae pv. phaseolicola (strain 1448A / Race 6)).